Here is a 156-residue protein sequence, read N- to C-terminus: Oxidized purine nucleoside triphosphate hydrolase (156 aa).

The Nudix hydrolase domain occupies 3-132; that stretch reads ASRLYTLVLV…WFPLLLQKKK (130 aa). Thr-8 lines the 2-oxo-dATP pocket. 2 residues coordinate 8-oxo-dGMP: Thr-8 and Lys-23. Positions 8 and 23 each coordinate 8-oxo-dGTP. Residues Thr-8 and Lys-23 each coordinate N(6)-methyl-AMP. Thr-8 and Lys-23 together coordinate O(6)-methyl-dGMP. Phe-27 serves as a coordination point for 8-oxo-ATP. 2-oxo-dATP is bound by residues Asn-33 and 35–38; that span reads FGGK. 8-oxo-dGMP is bound at residue Asn-33. 8-oxo-dGTP contacts are provided by residues Asn-33 and 35 to 38; that span reads FGGK. Asn-33 contributes to the O(6)-methyl-dGMP binding site. 8-oxo-ATP is bound by residues 35-38 and Glu-52; that span reads FGGK. Mg(2+)-binding residues include Gly-36, Glu-52, Glu-55, Glu-56, and Glu-100. Positions 37–58 match the Nudix box motif; that stretch reads GKVQEGETIEDGARRELQEESG. Glu-56 contributes to the 8-oxo-ATP binding site. Position 117-120 (117-120) interacts with 2-oxo-dATP; the sequence is WPDD. 117–120 is a binding site for 8-oxo-dGMP; that stretch reads WPDD. 117 to 120 contacts 8-oxo-dGTP; that stretch reads WPDD. 117 to 120 serves as a coordination point for N(6)-methyl-AMP; it reads WPDD. 117-120 is a binding site for O(6)-methyl-dGMP; it reads WPDD. 117-120 contributes to the 8-oxo-ATP binding site; the sequence is WPDD.

The protein belongs to the Nudix hydrolase family. As to quaternary structure, monomer. Mg(2+) is required as a cofactor. Post-translationally, the N-terminus is blocked. As to expression, widely expressed with highest expression in thymus, testis, embryo and proliferating blood lymphocytes.

The protein localises to the cytoplasm. It localises to the cytosol. Its subcellular location is the mitochondrion matrix. The protein resides in the nucleus. It catalyses the reaction 2-oxo-dATP + H2O = 2-oxo-dAMP + diphosphate + H(+). It carries out the reaction 2-oxo-ATP + H2O = 2-oxo-AMP + diphosphate + H(+). The catalysed reaction is 8-oxo-dGTP + H2O = 8-oxo-dGMP + diphosphate + H(+). The enzyme catalyses 8-oxo-dATP + H2O = 8-oxo-dAMP + diphosphate + H(+). It catalyses the reaction O(6)-methyl-dGTP + H2O = O(6)-methyl-dGMP + diphosphate + H(+). It carries out the reaction N(6)-methyl-dATP + H2O = N(6)-methyl-dAMP + diphosphate + H(+). The catalysed reaction is N(6)-methyl-ATP + H2O = N(6)-methyl-AMP + diphosphate + H(+). Its activity is regulated as follows. Inhibited by 2-oxo-dADP and 8-oxo-dGDP. Oxidized purine nucleoside triphosphate hydrolase which is a prominent sanitizer of the oxidized nucleotide pool. Catalyzes the hydrolysis of 2-oxo-dATP (2-hydroxy-dATP) into 2-oxo-dAMP. Also has a significant hydrolase activity toward 2-oxo-ATP, 8-oxo-dGTP and 8-oxo-dATP. Through the hydrolysis of oxidized purine nucleoside triphosphates, prevents their incorporation into DNA and the subsequent transversions A:T to C:G and G:C to T:A. Also catalyzes the hydrolysis of methylated purine nucleoside triphosphate preventing their integration into DNA. Through this antimutagenic activity protects cells from oxidative stress. In Homo sapiens (Human), this protein is Oxidized purine nucleoside triphosphate hydrolase (NUDT1).